The following is a 459-amino-acid chain: MAP kinase-interacting serine/threonine-protein kinase 2 (459 aa).

The interval 37-67 (DFSPQCEARPDMPSSQPIDIPDAKKRGRKKK) is disordered. The short motif at 60-66 (KKRGRKK) is the Nuclear localization signal element. Residue Ser74 is modified to Phosphoserine. Residues 84–368 (QLQEDVLGEG…AAQVLQHPWV (285 aa)) enclose the Protein kinase domain. Residues 90–98 (LGEGAHARV) and Lys113 contribute to the ATP site. 160-162 (EKM) lines the staurosporine pocket. The Proton acceptor role is filled by Asp205. Residue Glu209 participates in staurosporine binding. Thr244 and Thr249 each carry phosphothreonine. Zn(2+) contacts are provided by Cys299, Cys311, and Cys314. Thr379 is subject to Phosphothreonine. Phosphoserine is present on residues Ser431 and Ser434. Residues 438 to 442 (LAQRR) carry the MAP kinase binding motif. Residue Ser446 is modified to Phosphoserine. Position 450 is a phosphothreonine (Thr450).

This sequence belongs to the protein kinase superfamily. CAMK Ser/Thr protein kinase family. Interacts with ESR2 and EIF4E in the nucleus. Monomer. Interacts with the C-terminal regions of EIF4G1 and EIF4G2; this interaction is promoted when MAPK pathways are repressed but repressed upon ERK proteins activation. Also binds to dephosphorylated MAPK3/ERK1 and MAPK1/ERK2. Interaction with phosphorylated MAPK3/ERK1 and MAPK1/ERK2 protects it from dephosphorylation and inactivation. The cofactor is Mg(2+). It depends on Zn(2+) as a cofactor. Post-translationally, dual phosphorylation of Thr-244 and Thr-249 activates the kinase. Phosphorylation of Thr-379 activates the kinase. Phosphorylated upon arsenic trioxide As(2)O(3) treatment. Phosphorylated by MAPK1/ERK2, MAPK11 and MAPK14. Dephosphorylated by PP2A. As to expression, ubiquitously expressed in all tissues examined, with high levels in skeletal muscle and low levels in brain.

It localises to the cytoplasm. Its subcellular location is the nucleus. The protein resides in the PML body. It carries out the reaction L-seryl-[protein] + ATP = O-phospho-L-seryl-[protein] + ADP + H(+). The catalysed reaction is L-threonyl-[protein] + ATP = O-phospho-L-threonyl-[protein] + ADP + H(+). Inhibited by CGP57380 and staurosporine. Serine/threonine-protein kinase that phosphorylates SFPQ/PSF, HNRNPA1 and EIF4E. May play a role in the response to environmental stress and cytokines. Appears to regulate translation by phosphorylating EIF4E, thus increasing the affinity of this protein for the 7-methylguanosine-containing mRNA cap. Required for mediating PP2A-inhibition-induced EIF4E phosphorylation. Triggers EIF4E shuttling from cytoplasm to nucleus. Enhances the formation of EIF4F complex in pachytene spermatocytes, thus promoting mRNA translation during spermatogenesis. Displays a high basal kinase activity. Acts as a mediator of the suppressive effects of IFNgamma on hematopoiesis. Negative regulator for signals that control generation of arsenic trioxide As(2)O(3)-dependent apoptosis and anti-leukemic responses. Involved in anti-apoptotic signaling in response to serum withdrawal. The protein is MAP kinase-interacting serine/threonine-protein kinase 2 (Mknk2) of Mus musculus (Mouse).